The following is a 168-amino-acid chain: MMIDVFLIALLLSILTGNIKNVLKYNYKGLYLFAIPFVLQLLPWKEILVPLSFVMLFLFFIWNRNIPGFKLMAIGAVLNGFTMSVNGGKMPVWEPTLKLLNLDLDFKHTAFTEFSWKTLLADYIPVYLPWGRKFVISVGDILVFIGVFIFFVLKPRFQTQPSRVPHES.

Helical transmembrane passes span 41–61 and 133–153; these read LLPWKEILVPLSFVMLFLFFI and KFVISVGDILVFIGVFIFFVL.

It is found in the cell membrane. This is an uncharacterized protein from Thermotoga maritima (strain ATCC 43589 / DSM 3109 / JCM 10099 / NBRC 100826 / MSB8).